We begin with the raw amino-acid sequence, 427 residues long: A-adding tRNA nucleotidyltransferase (427 aa).

49–52 contacts ATP; the sequence is GTVR. Mg(2+)-binding residues include aspartate 62 and aspartate 64. ATP is bound by residues 136-137, asparagine 141, 181-190, arginine 194, and arginine 225; these read RD and DPTRLLRGVR.

Belongs to the tRNA nucleotidyltransferase/poly(A) polymerase family. Requires Mg(2+) as cofactor.

It carries out the reaction a tRNA with a 3' CC end + ATP = a tRNA with a 3' CCA end + diphosphate. Its function is as follows. tRNA nucleotidyltransferase involved in the synthesis of the tRNA CCA terminus. Adds the terminal adenosine residue to tRNA. This is A-adding tRNA nucleotidyltransferase from Halalkalibacterium halodurans (strain ATCC BAA-125 / DSM 18197 / FERM 7344 / JCM 9153 / C-125) (Bacillus halodurans).